A 393-amino-acid polypeptide reads, in one-letter code: Squamosa promoter-binding-like protein 17 (393 aa).

The span at 40 to 49 (AAAVESSSTS) shows a compositional bias: low complexity. A disordered region spans residues 40–67 (AAAVESSSTSSGGGGKKGKGVAAAAAPP). An SBP-type zinc finger spans residues 71-148 (PPRCQVEGCG…AGHNERRRKP (78 aa)). The Zn(2+) site is built by C74, C79, C96, H99, C115, C118, H122, and C134. Residues 131 to 147 (KKSCRRRLAGHNERRRK) carry the Bipartite nuclear localization signal motif. Residues 137-148 (RLAGHNERRRKP) show a composition bias toward basic residues. Disordered regions lie at residues 137 to 158 (RLAG…SRYG), 273 to 301 (WDTT…GNNP), and 317 to 393 (GWNS…NWSL). Polar residues-rich tracts occupy residues 273–293 (WDTT…STAS) and 380–393 (GAFS…NWSL).

Expressed in young panicles.

Its subcellular location is the nucleus. In terms of biological role, trans-acting factor that binds specifically to the consensus nucleotide sequence 5'-TNCGTACAA-3'. May be involved in panicle development. The protein is Squamosa promoter-binding-like protein 17 (SPL17) of Oryza sativa subsp. japonica (Rice).